Here is a 119-residue protein sequence, read N- to C-terminus: Beta-2-microglobulin (119 aa).

The first 20 residues, 1 to 20 (MARTVATFFLMLVSLACLDA), serve as a signal peptide directing secretion. An Ig-like C1-type domain is found at 25–114 (PQVQVYTRHP…VTLKEPKVVT (90 aa)). A disulfide bridge links Cys45 with Cys100.

The protein belongs to the beta-2-microglobulin family. In terms of assembly, heterodimer of an alpha chain and a beta chain. Beta-2-microglobulin is the beta-chain of major histocompatibility complex class I molecules.

The protein localises to the secreted. In terms of biological role, component of the class I major histocompatibility complex (MHC). Involved in the presentation of peptide antigens to the immune system. The chain is Beta-2-microglobulin (B2M) from Sigmodon hispidus (Hispid cotton rat).